A 91-amino-acid chain; its full sequence is Potassium channel toxin Meg-beta-KTx1 (91 aa).

Positions 1 to 19 are cleaved as a signal peptide; sequence MQRNLVVLLFLGMVALSSC. Positions 20–27 are excised as a propeptide; the sequence is GLREKHFQ. Residues 54-91 form the BetaSPN-type CS-alpha/beta domain; sequence QFGCPAYQGYCDDHCQDIKKQEGFCHGFKCKCGIPMGF. 3 disulfides stabilise this stretch: Cys57-Cys78, Cys64-Cys83, and Cys68-Cys85.

This sequence belongs to the long chain scorpion toxin family. Class 1 subfamily. Expressed by the venom gland.

The protein localises to the secreted. Functionally, inhibits voltage-gated potassium channel. This chain is Potassium channel toxin Meg-beta-KTx1, found in Mesobuthus gibbosus (Mediterranean checkered scorpion).